We begin with the raw amino-acid sequence, 428 residues long: Endoplasmic reticulum junction formation protein lunapark (428 aa).

G2 is lipidated: N-myristoyl glycine. The Cytoplasmic segment spans residues 2–45 (GGLFSRWRTKPSTVEVLESIDKEIQALEEFREKNQRLQKLWVGR). A coiled-coil region spans residues 16 to 41 (EVLESIDKEIQALEEFREKNQRLQKL). The chain crosses the membrane as a helical span at residues 46-66 (LILYSSVLYLFTCLIVYLWYL). The Lumenal portion of the chain corresponds to 67–77 (PDEFTARLAMT). A helical transmembrane segment spans residues 78-98 (LPFFAFPLIIWSIRTVIIFFF). The Cytoplasmic segment spans residues 99–428 (SKRTERNNEA…ELSGESLTAE (330 aa)). The stretch at 102–128 (TERNNEALDDLKSQRKKILEEVMEKET) forms a coiled coil. S114, S153, S177, S182, and S194 each carry phosphoserine. Residues 143-247 (SKKAKECEPP…HPPGPPLARP (105 aa)) form a disordered region. The segment covering 185 to 198 (QGPPPQVPVSPGPP) has biased composition (pro residues). Phosphothreonine occurs at positions 211 and 213. 2 positions are modified to phosphoserine: S217 and S227. A C4-type; plays a role in ER morphology zinc finger spans residues 276–301 (CQQCFSHNGMALKEEFEYIAFRCAYC). A phosphoserine mark is found at S321, S353, and S384. Residues 356–428 (HDVLDDNTEQ…ELSGESLTAE (73 aa)) form a disordered region. Residues 386 to 401 (SEEPEEKQETENEEAS) are compositionally biased toward acidic residues. At S414 the chain carries Phosphoserine.

This sequence belongs to the lunapark family. As to quaternary structure, homodimer; homodimerization requires the C4-type zinc finger motif and decreases during mitosis in a phosphorylation-dependent manner. Post-translationally, myristoylated; myristoylation is necessary for the endoplasmic reticulum (ER) three-way ER tubular junction formation, but is not required neither for membrane translocation, membrane topology formation, nor for the specific localization to ER membranes. Phosphorylated. Phosphorylation occurs at Ser-177, Ser-182, Ser-217, Ser-227, Ser-321 and Ser-384 during interphase. Phosphorylation occurs at Ser-114, Ser-153, Ser-194, Thr-211 and Ser-353 during mitosis; these phosphorylations reduce both its homodimerization and the ER three-way tubular junction formation. In terms of processing, subject to proteasomal degradation following phosphorylation during mitosis. In terms of tissue distribution, expressed in neural precursor cells, where it is detected at the growth-cone-like structure and branching sites of neurite-like processes.

Its subcellular location is the endoplasmic reticulum membrane. Its function is as follows. Endoplasmic reticulum (ER)-shaping membrane protein that plays a role in determining ER morphology. Involved in the stabilization of nascent three-way ER tubular junctions within the ER network. May also play a role as a curvature-stabilizing protein within the three-way ER tubular junction network. May be involved in limb development. Is involved in central nervous system development. In Homo sapiens (Human), this protein is Endoplasmic reticulum junction formation protein lunapark.